The sequence spans 543 residues: Oxalate--CoA ligase (543 aa).

His196–Val207 serves as a coordination point for ATP. The FACS signature appears at Glu410 to Lys458. A C-terminal peroxisome targeting signal (PTS1) motif is present at residues Ser541–Leu543.

The protein belongs to the ATP-dependent AMP-binding enzyme family. Interacts with PEX5.

It localises to the peroxisome matrix. It is found in the peroxisome membrane. It catalyses the reaction oxalate + ATP + CoA = oxalyl-CoA + AMP + diphosphate. In terms of biological role, catalyzes the first step in a degradation pathway of oxalate to CO(2) to protect the cell against the harmful effects of oxalate derived from endogenous processes or an environmental sources. This chain is Oxalate--CoA ligase, found in Saccharomyces cerevisiae (strain ATCC 204508 / S288c) (Baker's yeast).